The following is a 614-amino-acid chain: FAD-linked oxidoreductase ffsJ (614 aa).

The first 19 residues, 1-19, serve as a signal peptide directing secretion; sequence MRLTRALTPAILALPAAHA. Asparagine 30, asparagine 53, asparagine 72, and asparagine 114 each carry an N-linked (GlcNAc...) asparagine glycan. In terms of domain architecture, FAD-binding PCMH-type spans 119–301; the sequence is TGSLPAYYID…LSSTHRVEPE (183 aa). Residues asparagine 314, asparagine 329, asparagine 461, asparagine 465, asparagine 478, and asparagine 514 are each glycosylated (N-linked (GlcNAc...) asparagine). The tract at residues 453 to 495 is disordered; the sequence is NGHGRSNNNNSNNSSTSTSTSTSSKNGSVKPYAYGGKETTSST. Low complexity predominate over residues 456-480; that stretch reads GRSNNNNSNNSSTSTSTSTSSKNGS.

Belongs to the oxygen-dependent FAD-linked oxidoreductase family. FAD serves as cofactor.

Its pathway is mycotoxin biosynthesis. Functionally, FAD-linked oxidoreductase; part of the gene cluster that mediates the biosynthesis of the cytotoxic leucine-containing cytochalasans, including aspochalasin C, aspochalasin E, TMC-169, flavichalasine F, aspergillin PZ, aspochalasin M and flavichalasine G. The first step in the pathway is catalyzed by the hybrid PKS-NRPS ffsA that utilizes 8 units of malonyl-CoA to iteratively assemble the octaketide chain before addition of L-leucine by the C-terminal NRPS modules. Because ffsA lacks a designated enoylreductase (ER) domain, the required activity is provided the enoyl reductase fssC. The methyltransferase (MT) domain of ffsA catalyzes the alpha-methylation at C10 and C14 using S-adenosyl-L-methionine as the methyl-donating cosubstrate. Reduction by the hydrolyase ffsE, followed by dehydration and intra-molecular Diels-Alder cyclization by the Diels-Alderase ffsF then yield the required isoindolone-fused macrocycle. A number of oxidative steps catalyzed by the tailoring cytochrome P450 monooxygenase ffsD, the FAD-linked oxidoreductase ffsJ and the short-chain dehydrogenase/reductase ffsI, are further required to afford the final products. The chain is FAD-linked oxidoreductase ffsJ from Aspergillus flavipes.